A 140-amino-acid polypeptide reads, in one-letter code: UPF0134 protein MPN_130 (140 aa).

This sequence belongs to the UPF0134 family.

This is UPF0134 protein MPN_130 from Mycoplasma pneumoniae (strain ATCC 29342 / M129 / Subtype 1) (Mycoplasmoides pneumoniae).